The sequence spans 203 residues: CASP-like protein 5A2 (203 aa).

The Cytoplasmic portion of the chain corresponds to 1–63 (MRASRPVVHP…KDPPGAPGTP (63 aa)). The interval 39 to 58 (AAHGGENAQPRGVRMKDPPG) is disordered. A helical membrane pass occupies residues 64–84 (GGLGLRLVQAFFAAAALAVMA). The Extracellular segment spans residues 85–94 (STDDFPSVSA). A helical transmembrane segment spans residues 95–115 (FCYLVAAAILQCLWSLSLAVV). The Cytoplasmic segment spans residues 116–139 (DIYALLVKRSLRNPQAVCIFTIGD). The chain crosses the membrane as a helical span at residues 140–160 (GITGTLTLGAACASAGITVLI). Over 161–177 (GNDLNICANNHCASFET) the chain is Extracellular. A helical transmembrane segment spans residues 178–198 (ATAMAFISWFALAPSCVLNFW). Residues 199–203 (SMASR) are Cytoplasmic-facing.

This sequence belongs to the Casparian strip membrane proteins (CASP) family. Homodimer and heterodimers.

It localises to the cell membrane. In Oryza sativa subsp. indica (Rice), this protein is CASP-like protein 5A2.